The following is a 425-amino-acid chain: Enolase (425 aa).

Gln-163 serves as a coordination point for (2R)-2-phosphoglycerate. The Proton donor role is filled by Glu-205. Mg(2+) contacts are provided by Asp-242, Glu-285, and Asp-312. Positions 337, 366, 367, and 388 each coordinate (2R)-2-phosphoglycerate. The active-site Proton acceptor is Lys-337.

The protein belongs to the enolase family. Mg(2+) serves as cofactor.

It localises to the cytoplasm. Its subcellular location is the secreted. The protein localises to the cell surface. It catalyses the reaction (2R)-2-phosphoglycerate = phosphoenolpyruvate + H2O. It functions in the pathway carbohydrate degradation; glycolysis; pyruvate from D-glyceraldehyde 3-phosphate: step 4/5. Functionally, catalyzes the reversible conversion of 2-phosphoglycerate (2-PG) into phosphoenolpyruvate (PEP). It is essential for the degradation of carbohydrates via glycolysis. This chain is Enolase, found in Ruegeria sp. (strain TM1040) (Silicibacter sp.).